The chain runs to 309 residues: ADP-L-glycero-D-manno-heptose-6-epimerase (309 aa).

NADP(+) is bound by residues 10–11, 31–32, Lys-38, Lys-53, 75–79, and Asn-92; these read LI, DN, and QGACS. Tyr-139 (proton acceptor) is an active-site residue. An NADP(+)-binding site is contributed by Lys-143. Asn-168 is a substrate binding site. 2 residues coordinate NADP(+): Val-169 and Lys-177. The Proton acceptor role is filled by Lys-177. Substrate-binding positions include Ser-179, His-186, 200-203, Arg-208, and Tyr-271; that span reads FAGS.

It belongs to the NAD(P)-dependent epimerase/dehydratase family. HldD subfamily. Homopentamer. NADP(+) serves as cofactor.

It catalyses the reaction ADP-D-glycero-beta-D-manno-heptose = ADP-L-glycero-beta-D-manno-heptose. The protein operates within nucleotide-sugar biosynthesis; ADP-L-glycero-beta-D-manno-heptose biosynthesis; ADP-L-glycero-beta-D-manno-heptose from D-glycero-beta-D-manno-heptose 7-phosphate: step 4/4. Catalyzes the interconversion between ADP-D-glycero-beta-D-manno-heptose and ADP-L-glycero-beta-D-manno-heptose via an epimerization at carbon 6 of the heptose. This is ADP-L-glycero-D-manno-heptose-6-epimerase from Histophilus somni (strain 2336) (Haemophilus somnus).